A 301-amino-acid chain; its full sequence is Probable alpha-L-glutamate ligase (301 aa).

An ATP-grasp domain is found at 104–287 (LQLLSRKGIG…IAGMIIEYIE (184 aa)). Residues K141, 178 to 179 (EY), D187, and 211 to 213 (RSN) each bind ATP. The Mg(2+) site is built by D248, E260, and N262. Mn(2+) is bound by residues D248, E260, and N262.

The protein belongs to the RimK family. The cofactor is Mg(2+). Mn(2+) serves as cofactor.

This chain is Probable alpha-L-glutamate ligase, found in Methanococcoides burtonii (strain DSM 6242 / NBRC 107633 / OCM 468 / ACE-M).